The sequence spans 897 residues: Translation initiation factor IF-2 (897 aa).

The tract at residues 52–310 (EHGSAPDKLT…LLQQGFQKPA (259 aa)) is disordered. The segment covering 68–82 (STLNVPGTGGKSKSV) has biased composition (polar residues). 2 stretches are compositionally biased toward basic and acidic residues: residues 85 to 159 (EVRK…KDKV) and 166 to 217 (EMTK…ENEK). Over residues 256-272 (GRTRTASKTARPQKKGN) the composition is skewed to basic residues. The segment covering 273–286 (KHAESKADREEARA) has biased composition (basic and acidic residues). One can recognise a tr-type G domain in the interval 396 to 565 (PRAPVVTIMG…LLQAEVLELK (170 aa)). The G1 stretch occupies residues 405 to 412 (GHVDHGKT). GTP is bound at residue 405–412 (GHVDHGKT). The G2 stretch occupies residues 430-434 (GITQH). A G3 region spans residues 451 to 454 (DTPG). GTP is bound by residues 451 to 455 (DTPGH) and 505 to 508 (NKID). The G4 stretch occupies residues 505–508 (NKID). The interval 541-543 (SAK) is G5.

It belongs to the TRAFAC class translation factor GTPase superfamily. Classic translation factor GTPase family. IF-2 subfamily.

It is found in the cytoplasm. One of the essential components for the initiation of protein synthesis. Protects formylmethionyl-tRNA from spontaneous hydrolysis and promotes its binding to the 30S ribosomal subunits. Also involved in the hydrolysis of GTP during the formation of the 70S ribosomal complex. This is Translation initiation factor IF-2 (infB) from Enterobacter cloacae.